Here is a 1023-residue protein sequence, read N- to C-terminus: StAR-related lipid transfer protein 8 (1023 aa).

Disordered stretches follow at residues 46–67 (PMGSSDLLAPPSPGLPATSSCE) and 82–161 (TVSL…KVSK). The segment covering 99–114 (PSSSDRPLLSPTQGQE) has biased composition (polar residues). S108 is subject to Phosphoserine. The segment covering 120 to 130 (AKKRHRNRSFL) has biased composition (basic residues). Residues 143–161 (GSQQAEPKHSPATSEKVSK) show a composition bias toward polar residues. Residue R169 is modified to Asymmetric dimethylarginine. 2 positions are modified to phosphoserine: S235 and S238. Residues 387-397 (PAQAPAEAEPV) are compositionally biased toward low complexity. 2 disordered regions span residues 387–461 (PAQA…MNEA) and 467–486 (LAGLQASMPRERRDSGVGAS). Positions 441–459 (ISDTVASSSELDSSGNSMN) are enriched in polar residues. Phosphoserine occurs at positions 498 and 506. Residues 573–777 (PPLIHVQRTG…HMISDCKKLF (205 aa)) form the Rho-GAP domain. The disordered stretch occupies residues 733–757 (KKDSPSPRIKSKRSLIGRPGPRDLS). Residues 809–1017 (AQAAGVSLSL…RDSFPTLQAA (209 aa)) form the START domain.

In terms of assembly, binds both the SH2 and PTB domains of TNS1. In terms of tissue distribution, widely expressed with highest levels in kidney, lung and placenta.

The protein localises to the cell junction. Its subcellular location is the focal adhesion. Its function is as follows. Accelerates GTPase activity of RHOA and CDC42, but not RAC1. Stimulates the hydrolysis of phosphatidylinositol 4,5-bisphosphate by PLCD1. In Homo sapiens (Human), this protein is StAR-related lipid transfer protein 8 (STARD8).